The chain runs to 178 residues: Adenine phosphoribosyltransferase (178 aa).

The protein belongs to the purine/pyrimidine phosphoribosyltransferase family. In terms of assembly, homodimer.

It is found in the cytoplasm. The enzyme catalyses AMP + diphosphate = 5-phospho-alpha-D-ribose 1-diphosphate + adenine. Its pathway is purine metabolism; AMP biosynthesis via salvage pathway; AMP from adenine: step 1/1. Catalyzes a salvage reaction resulting in the formation of AMP, that is energically less costly than de novo synthesis. This chain is Adenine phosphoribosyltransferase, found in Cereibacter sphaeroides (strain ATCC 17025 / ATH 2.4.3) (Rhodobacter sphaeroides).